A 580-amino-acid chain; its full sequence is Anaphase-promoting complex subunit 7 (580 aa).

10 TPR repeats span residues 50–83, 107–140, 141–175, 253–286, 321–354, 356–388, 390–421, 422–456, 458–490, and 491–523; these read IISF…LFKV, YELK…SRGL, DTHL…CPLC, VLEK…DPYY, AETW…KESH, FAHS…SKNI, TARE…SPDY, SKTM…SPHC, DTVL…QETD, and LMHT…NPQY. Residues 539 to 580 are disordered; sequence GIDPDQELDQENDDDDQEEGEGENDQEENDDDDNDDDDEYIS. A compositionally biased stretch (acidic residues) spans 542-580; the sequence is PDQELDQENDDDDQEEGEGENDQEENDDDDNDDDDEYIS.

It belongs to the APC7 family. As to quaternary structure, the APC/C is composed of at least 13 subunits that stay tightly associated throughout the cell cycle: anapc1, anapc2, anapc3, anapc4, anapc5, anapc6, anapc7, anapc8, anapc10, anapc11, cdc20, cdc26 and cdh1.

Its subcellular location is the nucleus. It functions in the pathway protein modification; protein ubiquitination. Its function is as follows. Component of the anaphase promoting complex/cyclosome (APC/C), a cell cycle-regulated E3 ubiquitin-protein ligase complex that controls progression through mitosis and the G1 phase of the cell cycle. This Dictyostelium discoideum (Social amoeba) protein is Anaphase-promoting complex subunit 7 (anapc7).